The chain runs to 368 residues: Histidinol-phosphate aminotransferase (368 aa).

Lysine 229 carries the N6-(pyridoxal phosphate)lysine modification.

This sequence belongs to the class-II pyridoxal-phosphate-dependent aminotransferase family. Histidinol-phosphate aminotransferase subfamily. Homodimer. It depends on pyridoxal 5'-phosphate as a cofactor.

It catalyses the reaction L-histidinol phosphate + 2-oxoglutarate = 3-(imidazol-4-yl)-2-oxopropyl phosphate + L-glutamate. It functions in the pathway amino-acid biosynthesis; L-histidine biosynthesis; L-histidine from 5-phospho-alpha-D-ribose 1-diphosphate: step 7/9. The polypeptide is Histidinol-phosphate aminotransferase (Acidovorax sp. (strain JS42)).